An 856-amino-acid polypeptide reads, in one-letter code: V-type proton ATPase 116 kDa subunit a 2 (856 aa).

Residues 1–393 (MGSLFRSETM…DAYGVGSYRE (393 aa)) lie on the Cytoplasmic side of the membrane. Residues 394–412 (VNPALFTIITFPFLFAVMF) form a helical membrane-spanning segment. At 413 to 414 (GD) the chain is on the vacuolar side. The chain crosses the membrane as a helical span at residues 415 to 431 (FGHGFVMFLFALLLVLN). Residues 432-445 (ENHPRLNQSQEIMR) lie on the Cytoplasmic side of the membrane. Residues 446–475 (MFFNGRYILLLMGLFSVYTGLIYNDCFSKS) traverse the membrane as a helical segment. The Vacuolar portion of the chain corresponds to 476–549 (VNLFGSGWNV…ATNRLTFLNS (74 aa)). Asn484 and Asn505 each carry an N-linked (GlcNAc...) asparagine glycan. Residues 550-569 (FKMKMSVILGIIHMTFGVIL) traverse the membrane as a helical segment. The Cytoplasmic portion of the chain corresponds to 570 to 587 (GIFNHLHFRKKFNIYLVS). The chain crosses the membrane as a helical span at residues 588-608 (IPELLFMLCIFGYLIFMIFYK). Residues 609-651 (WLVFSAETSRVAPSILIEFINMFLFPASKTSGLYTGQEYVQRV) lie on the Vacuolar side of the membrane. The chain crosses the membrane as a helical span at residues 652-671 (LLVVTALSVPVLFLGKPLFL). At 672–739 (LWLHNGRSCF…EILMTQVIHS (68 aa)) the chain is on the cytoplasmic side. A phosphoserine mark is found at Ser695 and Ser700. Residues 740-764 (IEYCLGCISNTASYLRLWALSLAHA) traverse the membrane as a helical segment. The Vacuolar segment spans residues 765-785 (QLSDVLWAMLMRVGLRVDTTY). A helical membrane pass occupies residues 786 to 824 (GVLLLLPVIALFAVLTIFILLIMEGLSAFLHAIRLHWVE). Residues 825–856 (FQNKFYVGAGTKFVPFSFSLLSSKFNNDDSVA) lie on the Cytoplasmic side of the membrane.

This sequence belongs to the V-ATPase 116 kDa subunit family. V-ATPase is a heteromultimeric enzyme made up of two complexes: the ATP-hydrolytic V1 complex and the proton translocation V0 complex. The V1 complex consists of three catalytic AB heterodimers that form a heterohexamer, three peripheral stalks each consisting of EG heterodimers, one central rotor including subunits D and F, and the regulatory subunits C and H. The proton translocation complex V0 consists of the proton transport subunit a, a ring of proteolipid subunits c9c'', rotary subunit d, subunits e and f, and the accessory subunits ATP6AP1/Ac45 and ATP6AP2/PRR. Directly interacts with PSCD2 through its N-terminal cytosolic tail in an intra-endosomal acidification-dependent manner. Disruption of this interaction results in the inhibition of endocytosis. Interacts with SPAAR.

It is found in the cell membrane. The protein localises to the endosome membrane. Functionally, subunit of the V0 complex of vacuolar(H+)-ATPase (V-ATPase), a multisubunit enzyme composed of a peripheral complex (V1) that hydrolyzes ATP and a membrane integral complex (V0) that translocates protons. V-ATPase is responsible for acidifying and maintaining the pH of intracellular compartments and in some cell types, is targeted to the plasma membrane, where it is responsible for acidifying the extracellular environment. Essential component of the endosomal pH-sensing machinery. May play a role in maintaining the Golgi functions, such as glycosylation maturation, by controlling the Golgi pH. In aerobic conditions, involved in intracellular iron homeostasis, thus triggering the activity of Fe(2+) prolyl hydroxylase (PHD) enzymes, and leading to HIF1A hydroxylation and subsequent proteasomal degradation. This chain is V-type proton ATPase 116 kDa subunit a 2 (ATP6V0A2), found in Homo sapiens (Human).